The chain runs to 202 residues: Holliday junction branch migration complex subunit RuvA (202 aa).

The interval 1–64 (MIGRLSGTLL…EDAHLLFGFA (64 aa)) is domain I. The interval 65 to 143 (GRAERELFRQ…SLPSADLLSP (79 aa)) is domain II. The flexible linker stretch occupies residues 144–152 (APAAGAALL). The tract at residues 153–202 (VENDERADISQALQALGYSAREAEAALKSVPDGTDVATGIRLALKALARP) is domain III.

It belongs to the RuvA family. In terms of assembly, homotetramer. Forms an RuvA(8)-RuvB(12)-Holliday junction (HJ) complex. HJ DNA is sandwiched between 2 RuvA tetramers; dsDNA enters through RuvA and exits via RuvB. An RuvB hexamer assembles on each DNA strand where it exits the tetramer. Each RuvB hexamer is contacted by two RuvA subunits (via domain III) on 2 adjacent RuvB subunits; this complex drives branch migration. In the full resolvosome a probable DNA-RuvA(4)-RuvB(12)-RuvC(2) complex forms which resolves the HJ.

It is found in the cytoplasm. Functionally, the RuvA-RuvB-RuvC complex processes Holliday junction (HJ) DNA during genetic recombination and DNA repair, while the RuvA-RuvB complex plays an important role in the rescue of blocked DNA replication forks via replication fork reversal (RFR). RuvA specifically binds to HJ cruciform DNA, conferring on it an open structure. The RuvB hexamer acts as an ATP-dependent pump, pulling dsDNA into and through the RuvAB complex. HJ branch migration allows RuvC to scan DNA until it finds its consensus sequence, where it cleaves and resolves the cruciform DNA. This Laribacter hongkongensis (strain HLHK9) protein is Holliday junction branch migration complex subunit RuvA.